Consider the following 128-residue polypeptide: Large ribosomal subunit protein bL17 (128 aa).

The protein belongs to the bacterial ribosomal protein bL17 family. Part of the 50S ribosomal subunit. Contacts protein L32.

The polypeptide is Large ribosomal subunit protein bL17 (Streptococcus uberis (strain ATCC BAA-854 / 0140J)).